A 311-amino-acid chain; its full sequence is HPr kinase/phosphorylase (311 aa).

Active-site residues include H138 and K159. 153–160 (GDSGIGKS) is a binding site for ATP. S160 contacts Mg(2+). The active-site Proton acceptor; for phosphorylation activity. Proton donor; for dephosphorylation activity is the D177. The segment at 201–210 (IEIRGVGIID) is important for the catalytic mechanism of both phosphorylation and dephosphorylation. A Mg(2+)-binding site is contributed by E202. R243 is a catalytic residue. Residues 264-269 (PVKTGR) are important for the catalytic mechanism of dephosphorylation.

Belongs to the HPrK/P family. Homohexamer. It depends on Mg(2+) as a cofactor.

The enzyme catalyses [HPr protein]-L-serine + ATP = [HPr protein]-O-phospho-L-serine + ADP + H(+). It catalyses the reaction [HPr protein]-O-phospho-L-serine + phosphate + H(+) = [HPr protein]-L-serine + diphosphate. Functionally, catalyzes the ATP- as well as the pyrophosphate-dependent phosphorylation of a specific serine residue in HPr, a phosphocarrier protein of the phosphoenolpyruvate-dependent sugar phosphotransferase system (PTS). HprK/P also catalyzes the pyrophosphate-producing, inorganic phosphate-dependent dephosphorylation (phosphorolysis) of seryl-phosphorylated HPr (P-Ser-HPr). The two antagonistic activities of HprK/P are regulated by several intracellular metabolites, which change their concentration in response to the absence or presence of rapidly metabolisable carbon sources (glucose, fructose, etc.) in the growth medium. Therefore, by controlling the phosphorylation state of HPr, HPrK/P is a sensor enzyme that plays a major role in the regulation of carbon metabolism and sugar transport: it mediates carbon catabolite repression (CCR), and regulates PTS-catalyzed carbohydrate uptake and inducer exclusion. The polypeptide is HPr kinase/phosphorylase (Streptococcus pneumoniae serotype 2 (strain D39 / NCTC 7466)).